Consider the following 478-residue polypeptide: Receptor-interacting serine/threonine-protein kinase 3 (478 aa).

Phosphoserine is present on S2. The 269-residue stretch at 22–290 (LENLGFVGKG…CESKTNNVYI (269 aa)) folds into the Protein kinase domain. ATP is bound by residues 28 to 36 (VGKGGFGAV) and K51. D143 (proton acceptor) is an active-site residue. S165 is subject to Phosphoserine. At T185 the chain carries Phosphothreonine. S201 bears the Phosphoserine; by autocatalysis mark. Position 228 is a phosphothreonine (T228). S229 bears the Phosphoserine; by autocatalysis mark. T254 is subject to Phosphothreonine. Residues S301 and S323 each carry the phosphoserine modification. A disordered region spans residues 311 to 330 (RSSDTKLSARESSQKGTEVD). The segment covering 313–330 (SDTKLSARESSQKGTEVD) has biased composition (basic and acidic residues). T335 carries the post-translational modification Phosphothreonine. Phosphoserine occurs at positions 350, 369, and 380. The tract at residues 362–429 (ERRGKEASFG…RNSNPWYTWN (68 aa)) is disordered. Over residues 376–385 (AGTSSDTLAG) the composition is skewed to polar residues. T392 is modified (phosphothreonine). The span at 413 to 429 (QRNQGDGRNSNPWYTWN) shows a compositional bias: polar residues. The RIP homotypic interaction motif (RHIM) signature appears at 437–461 (LQSIVLNNCSEVQIGQHNCMSVQPR). R474 bears the Omega-N-methylarginine mark.

It belongs to the protein kinase superfamily. TKL Ser/Thr protein kinase family. As to quaternary structure, interacts (via RIP homotypic interaction motif) with RIPK1 (via RIP homotypic interaction motif); this interaction induces RIPK1 phosphorylation and formation of a RIPK1-RIPK3 necrosis-inducing complex. Interacts with MLKL; the interaction is direct and triggers necroptosis. Interacts with ZBP1 (via RIP homotypic interaction motif); interaction with ZBP1 activates RIPK3, triggering necroptosis. Upon TNF-induced necrosis, the RIPK1-RIPK3 dimer further interacts with PGAM5 and MLKL; the formation of this complex leads to PGAM5 phosphorylation and increase in PGAM5 phosphatase activity. Binds TRAF2 and is recruited to the TNFR-1 signaling complex. Interacts with PYGL, GLUL and GLUD1; these interactions result in activation of these metabolic enzymes. Interacts with BIRC2/c-IAP1, BIRC3/c-IAP2 and XIAP/BIRC4. Interacts with ARHGEF2. Interacts with PELI1 (via atypical FHA domain); the phosphorylated form at Thr-185 binds preferentially to PELI1. Interacts with BUB1B, TRAF2 and STUB1. Interacts with CASP6. Component of the AIM2 PANoptosome complex, a multiprotein complex that drives inflammatory cell death (PANoptosis). In terms of processing, RIPK1 and RIPK3 undergo reciprocal auto- and trans-phosphorylation. Autophosphorylated following interaction with ZBP1. Phosphorylation of Ser-201 plays a role in the necroptotic function of RIPK3. Autophosphorylates at Thr-228 and Ser-229 following activation by ZBP1: phosphorylation at these sites is a hallmark of necroptosis and is required for binding MLKL. Phosphorylation at Thr-185 is important for its kinase activity, interaction with PELI1 and for its ability to mediate TNF-induced necroptosis. Polyubiquitinated with 'Lys-48' and 'Lys-63'-linked chains by BIRC2/c-IAP1 and BIRC3/c-IAP2, leading to activation of NF-kappa-B. Ubiquitinated by STUB1 leading to its subsequent proteasome-dependent degradation.

The protein localises to the cytoplasm. The protein resides in the cytosol. It localises to the nucleus. The catalysed reaction is L-seryl-[protein] + ATP = O-phospho-L-seryl-[protein] + ADP + H(+). The enzyme catalyses L-threonyl-[protein] + ATP = O-phospho-L-threonyl-[protein] + ADP + H(+). Activity is stimulated by ZBP1, which senses double-stranded Z-RNA structures. RIPK3-dependent necroptosis is inhibited by RIPK1: RIPK1 prevents the ZBP1-induced activation of RIPK3 via FADD-mediated recruitment of CASP8, which cleaves RIPK1 and limits TNF-induced necroptosis. Serine/threonine-protein kinase that activates necroptosis and apoptosis, two parallel forms of cell death. Necroptosis, a programmed cell death process in response to death-inducing TNF-alpha family members, is triggered by RIPK3 following activation by ZBP1. Activated RIPK3 forms a necrosis-inducing complex and mediates phosphorylation of MLKL, promoting MLKL localization to the plasma membrane and execution of programmed necrosis characterized by calcium influx and plasma membrane damage. In addition to TNF-induced necroptosis, necroptosis can also take place in the nucleus in response to orthomyxoviruses infection: following ZBP1 activation, which senses double-stranded Z-RNA structures, nuclear RIPK3 catalyzes phosphorylation and activation of MLKL, promoting disruption of the nuclear envelope and leakage of cellular DNA into the cytosol. Also regulates apoptosis: apoptosis depends on RIPK1, FADD and CASP8, and is independent of MLKL and RIPK3 kinase activity. Phosphorylates RIPK1: RIPK1 and RIPK3 undergo reciprocal auto- and trans-phosphorylation. In some cell types, also able to restrict viral replication by promoting cell death-independent responses. In response to flavivirus infection in neurons, promotes a cell death-independent pathway that restricts viral replication: together with ZBP1, promotes a death-independent transcriptional program that modifies the cellular metabolism via up-regulation expression of the enzyme ACOD1/IRG1 and production of the metabolite itaconate. Itaconate inhibits the activity of succinate dehydrogenase, generating a metabolic state in neurons that suppresses replication of viral genomes. RIPK3 binds to and enhances the activity of three metabolic enzymes: GLUL, GLUD1, and PYGL. These metabolic enzymes may eventually stimulate the tricarboxylic acid cycle and oxidative phosphorylation, which could result in enhanced ROS production. In Rattus norvegicus (Rat), this protein is Receptor-interacting serine/threonine-protein kinase 3.